Reading from the N-terminus, the 356-residue chain is Phosphoribosyl pyrophosphate synthase-associated protein 1 (356 aa).

Met-1 carries the post-translational modification N-acetylmethionine. A phosphoserine mark is found at Ser-177 and Ser-215.

This sequence belongs to the ribose-phosphate pyrophosphokinase family. In terms of assembly, binds to PRPS1 and PRPS2.

Seems to play a negative regulatory role in 5-phosphoribose 1-diphosphate synthesis. This chain is Phosphoribosyl pyrophosphate synthase-associated protein 1 (PRPSAP1), found in Bos taurus (Bovine).